A 185-amino-acid chain; its full sequence is Glycine-rich cell wall structural protein 2 (185 aa).

Positions 1–27 are cleaved as a signal peptide; sequence MATTKHLALAILVLLSIGMTTSARTLL. The disordered stretch occupies residues 149–185; the sequence is GYGSGGGGGGGGGQGGGSGSGSGSGYGSGSGGGNGHH.

The protein localises to the secreted. The protein resides in the cell wall. Functionally, responsible for plasticity of the cell wall. The chain is Glycine-rich cell wall structural protein 2 (GRP0.9) from Oryza sativa subsp. indica (Rice).